Consider the following 445-residue polypeptide: Phosphoglucosamine mutase (445 aa).

Residue Ser-102 is the Phosphoserine intermediate of the active site. Ser-102, Asp-241, Asp-243, and Asp-245 together coordinate Mg(2+). Residue Ser-102 is modified to Phosphoserine.

This sequence belongs to the phosphohexose mutase family. Mg(2+) is required as a cofactor. In terms of processing, activated by phosphorylation.

The catalysed reaction is alpha-D-glucosamine 1-phosphate = D-glucosamine 6-phosphate. In terms of biological role, catalyzes the conversion of glucosamine-6-phosphate to glucosamine-1-phosphate. The polypeptide is Phosphoglucosamine mutase (Escherichia coli O7:K1 (strain IAI39 / ExPEC)).